Here is a 533-residue protein sequence, read N- to C-terminus: Calcitonin receptor (533 aa).

A signal peptide spans 1 to 41 (MTPRRSRVKRRNLRKPKMRFLLVNRFTLLLLLLVSPTPVLQ). Residues 42 to 163 (APTNLTDSGL…FTSEKLQNAY (122 aa)) are Extracellular-facing. N-linked (GlcNAc...) asparagine glycosylation is found at Asn45, Asn90, Asn142, and Asn147. 3 disulfides stabilise this stretch: Cys72–Cys98, Cys89–Cys129, and Cys112–Cys151. A helical transmembrane segment spans residues 164 to 186 (VLYYLALVGHSLSIAALVASMLI). At 187 to 198 (FWIFKNLSCQRV) the chain is on the cytoplasmic side. Residues 199 to 219 (TLHKHMFLTYILNSIIIIIHL) traverse the membrane as a helical segment. Residues 220–273 (VEVVPNGDLVRRDPMHIFHHNTHMWTMQWELSPPLPLSAHEGKMDPHASEVISC) lie on the Extracellular side of the membrane. A disulfide bond links Cys273 and Cys343. Residues 274–296 (KVLHFLHQYMMSCNYFWMLCEGI) traverse the membrane as a helical segment. Residues 297–313 (YLHTLIVMAVFTDEQRL) lie on the Cytoplasmic side of the membrane. Residues 314–334 (RWYYLLGWGFPIVPTIIHAIT) traverse the membrane as a helical segment. Residues 335-350 (RALYYNDNCWLSAETH) lie on the Extracellular side of the membrane. A helical transmembrane segment spans residues 351 to 374 (LLYIIHGPVMVALVVNFFFLLNIV). Topologically, residues 375 to 394 (RVLVTKMRQTHEAESYMYLK) are cytoplasmic. The chain crosses the membrane as a helical span at residues 395-413 (AVKATMVLVPLLGIQFVVF). Over 414 to 421 (PWRPSNKV) the chain is Extracellular. The chain crosses the membrane as a helical span at residues 422-448 (LGKIYDYLMHSLIHFQGFFVATIYCFC). Topologically, residues 449-533 (NHEVQVTLKR…MNVIQQDASA (85 aa)) are cytoplasmic.

It belongs to the G-protein coupled receptor 2 family. Heterodimer of CALCR and RAMP1, RAMP2 or RAMP3; the receptor complexes function as AMYR1, AMYR2 and AMYR3 receptors, respectively, and respond to amylin/IAPP, calcitonin/CT and CGRP1 ligands. Interacts with GPRASP2.

It is found in the cell membrane. Functionally, g protein-coupled receptor activated by ligand peptides amylin (IAPP), calcitonin (CT/CALCA) and calcitonin gene-related peptide type 1 (CGRP1/CALCA). CALCR interacts with receptor-activity-modifying proteins RAMP1, 2 and 3 to form receptor complexes AMYR1, 2 and 3, respectively. IAPP, CT and CGRP1 activate CALCR and AMYRs with distinct modes of receptor activation resulting in specific phenotypes. Ligand binding causes a conformation change that triggers signaling via guanine nucleotide-binding proteins (G proteins) and modulates the activity of downstream effectors. Activates cAMP-dependent pathway. This is Calcitonin receptor from Mus musculus (Mouse).